Here is a 335-residue protein sequence, read N- to C-terminus: Nucleoid-associated protein KPN78578_25800 (335 aa).

The protein belongs to the YejK family.

It localises to the cytoplasm. The protein localises to the nucleoid. The polypeptide is Nucleoid-associated protein KPN78578_25800 (Klebsiella pneumoniae subsp. pneumoniae (strain ATCC 700721 / MGH 78578)).